Here is an 802-residue protein sequence, read N- to C-terminus: Protein enabled homolog (802 aa).

In terms of domain architecture, WH1 spans 1–111 (MSEQSICQAR…SAMMHALEVL (111 aa)). Residues 143-155 (NSQLPAQVQNGPS) are compositionally biased toward polar residues. The interval 143 to 166 (NSQLPAQVQNGPSQEELEIQRRQL) is disordered. S144 bears the Phosphoserine mark. Residues 154–258 (PSQEELEIQR…ERERRMSNAA (105 aa)) adopt a coiled-coil conformation. 7 repeat units span residues 175–179 (LERER), 180–184 (MERER), 185–189 (LERER), 190–194 (LERER), 195–199 (LERER), 200–204 (LEQEQ), and 205–209 (LERQR). Residues 175–209 (LERERMERERLERERLERERLERERLEQEQLERQR) are 7 X 5 AA tandem repeats of [LM]-E-[QR]-[EQ]-[QR]. Basic and acidic residues predominate over residues 245 to 254 (QVEWERERRM). Disordered stretches follow at residues 245–287 (QVEW…PSYA) and 341–622 (ATVP…RPLT). S255 carries the post-translational modification Phosphoserine; by PKA. A compositionally biased stretch (low complexity) spans 255 to 278 (SNAAPSSDSSLSSAPLPEYSSCQP). Residues 348-361 (NKNSRPSSPVNTPS) are compositionally biased toward polar residues. S383 bears the Phosphoserine mark. Positions 386 to 410 (IMISSPPGKATGPRPVLPVCVSSPV) are enriched in low complexity. Pro residues predominate over residues 431 to 464 (VSPPPTSGPAAPPPPPPPPPPPPPPPLPPPPLPP). The span at 485 to 505 (STPSSKPSVLPSPSAGAPASA) shows a compositional bias: low complexity. Positions 525 to 535 (AASQPAESPTP) are enriched in polar residues. Positions 542 to 553 (PPAPPPPPPLPS) are enriched in pro residues. A Phosphotyrosine modification is found at Y557. Pro residues predominate over residues 561–605 (LPPPPGPPPPPPLPSTGPPPPPPPPPPLPNQAPPPPPPPPAPPLP). Residues 623–643 (GLAAAIAGAKLRKVSRVEDGS) are EVH2 block A. The interval 623–799 (GLAAAIAGAK…DAIRQELSKS (177 aa)) is EVH2. Residues 632 to 635 (KLRK) carry the KLKR motif. 2 disordered regions span residues 639–675 (VEDG…GGSG) and 691–764 (AEKG…TEGL). Residues 664 to 675 (RGNGPLPLGGSG) show a composition bias toward gly residues. An EVH2 block B region spans residues 674-691 (SGLMEEMSALLARRRRIA). Positions 731–760 (RTNTMNGSKSPVISRPKSTPSSQPSANGVQ) are enriched in polar residues. Residues S738 and S740 each carry the phosphoserine modification. The interval 765 to 799 (DYDRLKQDILDEMRKELAKLKEELIDAIRQELSKS) is EVH2 block C. Positions 767 to 797 (DRLKQDILDEMRKELAKLKEELIDAIRQELS) form a coiled coil.

It belongs to the Ena/VASP family. Homotetramer. Interacts with APBB1IP, APBB1, PFN1 and ROBO4. Isoforms, containing the polyproline-rich regions with PPLP motifs, bind the WW domain of APBB1IP. Isoforms, containing the PPSY motif, bind, in vitro, to the WW2 and WW3 domains of NEDD4 and to the WW1 domain of YAP1. Binds the SH3 domain of BAIAP2-alpha but only after the autoinhibitory region of BAIAP2-alpha has been blocked by interaction with CDC42. Interacts, via the EVH1/WH1 domain, with the Pro-rich domains from VCL, ZYX and Listeria monocytogenes actA and with TES (via LIM domain). The TES LIM domain and the Pro-rich domains from VCL or ZYX compete for the same binding site. Interaction with ZYX is important for targeting ENAH to focal adhesions and enhances production of actin-rich structures at the apical surface of cells. Binds GPHN. Heterotrimer with TES and ACTL7A. Interacts with FAT1 (via EVH1 domains). Interacts, through the Pro-rich region, with the C-terminal SH3 domain of DNMPB. Interacts with PRPF40A. NTN1-induced PKA phosphorylation on Ser-255 directly parallels the formation of filopodial protrusions. As to expression, expressed in heart and testis, lower levels in lung, skeletal muscle, kidney, pancreas and brain. Isoform 5 is expressed exclusively in the brain. Isoform 2 is expressed predominantly in brain, testis, ovary and fat. In the brain, isoforms 2 and 5 are expressed at highest levels in the hippocampus, cortex and midbrain, and at lowest levels in the striatum and cerebellum. Isoform 6 is expressed in brain and spleen.

Its subcellular location is the cytoplasm. The protein localises to the cytoskeleton. The protein resides in the cell projection. It is found in the lamellipodium. It localises to the filopodium. Its subcellular location is the synapse. The protein localises to the cell junction. The protein resides in the focal adhesion. Functionally, ena/VASP proteins are actin-associated proteins involved in a range of processes dependent on cytoskeleton remodeling and cell polarity such as axon guidance and lamellipodial and filopodial dynamics in migrating cells. ENAH induces the formation of F-actin rich outgrowths in fibroblasts. Acts synergistically with BAIAP2-alpha and downstream of NTN1 to promote filipodia formation. The protein is Protein enabled homolog (Enah) of Mus musculus (Mouse).